We begin with the raw amino-acid sequence, 320 residues long: Phosphoribosylaminoimidazole-succinocarboxamide synthase (320 aa).

Residues 283–303 form a disordered region; it reads ESDWDRNSPPPPLPESIAHQT.

It belongs to the SAICAR synthetase family.

The catalysed reaction is 5-amino-1-(5-phospho-D-ribosyl)imidazole-4-carboxylate + L-aspartate + ATP = (2S)-2-[5-amino-1-(5-phospho-beta-D-ribosyl)imidazole-4-carboxamido]succinate + ADP + phosphate + 2 H(+). Its pathway is purine metabolism; IMP biosynthesis via de novo pathway; 5-amino-1-(5-phospho-D-ribosyl)imidazole-4-carboxamide from 5-amino-1-(5-phospho-D-ribosyl)imidazole-4-carboxylate: step 1/2. This Rhodopirellula baltica (strain DSM 10527 / NCIMB 13988 / SH1) protein is Phosphoribosylaminoimidazole-succinocarboxamide synthase.